The following is a 93-amino-acid chain: Small ribosomal subunit protein bS16 (93 aa).

It belongs to the bacterial ribosomal protein bS16 family.

The chain is Small ribosomal subunit protein bS16 from Opitutus terrae (strain DSM 11246 / JCM 15787 / PB90-1).